Here is a 105-residue protein sequence, read N- to C-terminus: Sec-independent protein translocase protein TatA (105 aa).

The helical transmembrane segment at 1-21 (MSLGPWEIGIIVLLIIVLFGA) threads the bilayer. Residues 41–50 (EVKEMNKDGD) show a composition bias toward basic and acidic residues. The interval 41–105 (EVKEMNKDGD…QNYEDPNRTS (65 aa)) is disordered. Positions 52–92 (PEQQQQPQQQIAPNQIEAPQPNFEQHYQGQQVQQPQNPQTP) are enriched in low complexity. Residues 96–105 (QNYEDPNRTS) show a composition bias toward basic and acidic residues.

The protein belongs to the TatA/E family. As to quaternary structure, the Tat system comprises two distinct complexes: a TatABC complex, containing multiple copies of TatA, TatB and TatC subunits, and a separate TatA complex, containing only TatA subunits. Substrates initially bind to the TatABC complex, which probably triggers association of the separate TatA complex to form the active translocon.

The protein resides in the cell membrane. Functionally, part of the twin-arginine translocation (Tat) system that transports large folded proteins containing a characteristic twin-arginine motif in their signal peptide across membranes. TatA could form the protein-conducting channel of the Tat system. This chain is Sec-independent protein translocase protein TatA, found in Corynebacterium glutamicum (strain ATCC 13032 / DSM 20300 / JCM 1318 / BCRC 11384 / CCUG 27702 / LMG 3730 / NBRC 12168 / NCIMB 10025 / NRRL B-2784 / 534).